We begin with the raw amino-acid sequence, 305 residues long: MSKVKKQPKIEALQNVDITFTNVSYVYSPKTPYEYTSLQDINVVIKPGKITAIIGSTGSGKSTLIQHINGLLIPTTGVVDTNGFIIKAKQKRIKNIKQLRKSIGLVFQFPEYQLFEETIEKDIMFGPVHLGETKEVARENAKKYLEMVGLPLNYLERSPFDLSGGQKRRVAIAGILAMEGNTLILDEPTAGLDPEGEEDFIKLFQRINKEQNKRIILVTHNMDHVLEIADEVIALKEGRVFKVGSPFEIFKDKNLLQELLIEPPKIYHLIYQLQEKGLDLTNVNIRTIDQLAKKIIEHKEQKRKG.

An ABC transporter domain is found at 13–262 (LQNVDITFTN…KNLLQELLIE (250 aa)). 55–62 (GSTGSGKS) serves as a coordination point for ATP.

It belongs to the ABC transporter superfamily. Energy-coupling factor EcfA family. As to quaternary structure, forms a stable energy-coupling factor (ECF) transporter complex composed of 2 membrane-embedded substrate-binding proteins (S component), 2 ATP-binding proteins (A component) and 2 transmembrane proteins (T component).

Its subcellular location is the cell membrane. ATP-binding (A) component of a common energy-coupling factor (ECF) ABC-transporter complex. Unlike classic ABC transporters this ECF transporter provides the energy necessary to transport a number of different substrates. The protein is Energy-coupling factor transporter ATP-binding protein EcfA2 of Spiroplasma kunkelii.